A 618-amino-acid polypeptide reads, in one-letter code: Camphene synthase, chloroplastic (618 aa).

Residues 1-51 (MALLSITPLVSRSCLSSSHEIKALRRTIPTLGICRPGKSVAHSINMCLTSV) constitute a chloroplast transit peptide. Asp369, Asp373, and Asp521 together coordinate Mg(2+). The DDXXD motif signature appears at 369-373 (DDMYD).

Belongs to the terpene synthase family. Tpsd subfamily. Mg(2+) serves as cofactor. It depends on Mn(2+) as a cofactor. Requires K(+) as cofactor.

It localises to the plastid. Its subcellular location is the chloroplast. It carries out the reaction (2E)-geranyl diphosphate = (1S,4R)-camphene + diphosphate. It participates in terpene metabolism; oleoresin biosynthesis. Involved in defensive oleoresin formation in conifers in response to insect attack or other injury. Involved in monoterpene (C10) olefins biosynthesis. This Abies grandis (Grand fir) protein is Camphene synthase, chloroplastic (ag6).